Reading from the N-terminus, the 449-residue chain is Tubulin alpha-1C chain (449 aa).

The MREC motif motif lies at 1-4 (MREC). Q11 lines the GTP pocket. N6-acetyllysine is present on K40. 7 residues coordinate GTP: E71, S140, G144, T145, T179, N206, and N228. Residue E71 participates in Mg(2+) binding. Residue E254 is part of the active site. Y282 is modified (3'-nitrotyrosine). Residues 429 to 449 (EKDYEEVGADSAEGDDEGDEY) are disordered. Over residues 431–449 (DYEEVGADSAEGDDEGDEY) the composition is skewed to acidic residues. At Y432 the chain carries Phosphotyrosine. S439 is modified (phosphoserine). The residue at position 449 (Y449) is a 3'-nitrotyrosine.

It belongs to the tubulin family. As to quaternary structure, dimer of alpha and beta chains. A typical microtubule is a hollow water-filled tube with an outer diameter of 25 nm and an inner diameter of 15 nM. Alpha-beta heterodimers associate head-to-tail to form protofilaments running lengthwise along the microtubule wall with the beta-tubulin subunit facing the microtubule plus end conferring a structural polarity. Microtubules usually have 13 protofilaments but different protofilament numbers can be found in some organisms and specialized cells. It depends on Mg(2+) as a cofactor. In terms of processing, some glutamate residues at the C-terminus are polyglycylated, resulting in polyglycine chains on the gamma-carboxyl group. Glycylation is mainly limited to tubulin incorporated into axonemes (cilia and flagella) whereas glutamylation is prevalent in neuronal cells, centrioles, axonemes, and the mitotic spindle. Both modifications can coexist on the same protein on adjacent residues, and lowering polyglycylation levels increases polyglutamylation, and reciprocally. Cilia and flagella glycylation is required for their stability and maintenance. Flagella glycylation controls sperm motility. Post-translationally, some glutamate residues at the C-terminus are polyglutamylated, resulting in polyglutamate chains on the gamma-carboxyl group. Polyglutamylation plays a key role in microtubule severing by spastin (SPAST). SPAST preferentially recognizes and acts on microtubules decorated with short polyglutamate tails: severing activity by SPAST increases as the number of glutamates per tubulin rises from one to eight, but decreases beyond this glutamylation threshold. Glutamylation is also involved in cilia motility. Acetylation of alpha chains at Lys-40 is located inside the microtubule lumen. This modification has been correlated with increased microtubule stability, intracellular transport and ciliary assembly. In terms of processing, methylation of alpha chains at Lys-40 is found in mitotic microtubules and is required for normal mitosis and cytokinesis contributing to genomic stability. Post-translationally, nitration of Tyr-449 is irreversible and interferes with normal dynein intracellular distribution. Undergoes a tyrosination/detyrosination cycle, the cyclic removal and re-addition of a C-terminal tyrosine residue by the enzymes tubulin tyrosine carboxypeptidase (MATCAP1, VASH1 or VASH2) and tubulin tyrosine ligase (TTL), respectively. In terms of processing, tyrosination promotes microtubule interaction with CAP-Gly domain-containing proteins such as CLIP1, CLIP2 and DCTN1. Tyrosination regulates the initiation of dynein-dynactin motility via interaction with DCTN1, which brings the dynein-dynactin complex into contact with microtubules. In neurons, tyrosinated tubulins mediate the initiation of retrograde vesicle transport. Post-translationally, detyrosination is involved in metaphase plate congression by guiding chromosomes during mitosis: detyrosination promotes interaction with CENPE, promoting pole-proximal transport of chromosomes toward the equator. Detyrosination increases microtubules-dependent mechanotransduction in dystrophic cardiac and skeletal muscle. In cardiomyocytes, detyrosinated microtubules are required to resist to contractile compression during contraction: detyrosination promotes association with desmin (DES) at force-generating sarcomeres, leading to buckled microtubules and mechanical resistance to contraction.

Its subcellular location is the cytoplasm. The protein localises to the cytoskeleton. The catalysed reaction is GTP + H2O = GDP + phosphate + H(+). Tubulin is the major constituent of microtubules, a cylinder consisting of laterally associated linear protofilaments composed of alpha- and beta-tubulin heterodimers. Microtubules grow by the addition of GTP-tubulin dimers to the microtubule end, where a stabilizing cap forms. Below the cap, tubulin dimers are in GDP-bound state, owing to GTPase activity of alpha-tubulin. This is Tubulin alpha-1C chain (TUBA1C) from Bos taurus (Bovine).